The following is a 152-amino-acid chain: Large-conductance mechanosensitive channel (152 aa).

The next 2 helical transmembrane spans lie at 14–34 (VIDL…VTSL) and 81–101 (GLFL…FIVI).

This sequence belongs to the MscL family. In terms of assembly, homopentamer.

The protein resides in the cell membrane. In terms of biological role, channel that opens in response to stretch forces in the membrane lipid bilayer. May participate in the regulation of osmotic pressure changes within the cell. The sequence is that of Large-conductance mechanosensitive channel from Clostridium perfringens (strain ATCC 13124 / DSM 756 / JCM 1290 / NCIMB 6125 / NCTC 8237 / Type A).